The chain runs to 50 residues: Protein hunchback (50 aa).

C2H2-type zinc fingers lie at residues 1-5 (HLRNH), 11-33 (FKCN…MKSH), and 39-50 (YRCADCTYATKY).

It belongs to the hunchback C2H2-type zinc-finger protein family.

The protein localises to the nucleus. Functionally, gap class segmentation protein that controls development of head structures. The protein is Protein hunchback (hb) of Platynereis dumerilii (Dumeril's clam worm).